The sequence spans 315 residues: PIH1 domain-containing protein 2 (315 aa).

This sequence belongs to the PIH1 family.

The sequence is that of PIH1 domain-containing protein 2 (Pih1d2) from Mus musculus (Mouse).